Reading from the N-terminus, the 331-residue chain is Beta-ketoacyl-[acyl-carrier-protein] synthase III (331 aa).

Active-site residues include cysteine 115 and histidine 255. The interval 256–260 (QANFR) is ACP-binding. Residue asparagine 285 is part of the active site.

The protein belongs to the thiolase-like superfamily. FabH family. Homodimer.

The protein localises to the cytoplasm. It catalyses the reaction malonyl-[ACP] + acetyl-CoA + H(+) = 3-oxobutanoyl-[ACP] + CO2 + CoA. Its pathway is lipid metabolism; fatty acid biosynthesis. In terms of biological role, catalyzes the condensation reaction of fatty acid synthesis by the addition to an acyl acceptor of two carbons from malonyl-ACP. Catalyzes the first condensation reaction which initiates fatty acid synthesis and may therefore play a role in governing the total rate of fatty acid production. Possesses both acetoacetyl-ACP synthase and acetyl transacylase activities. Its substrate specificity determines the biosynthesis of branched-chain and/or straight-chain of fatty acids. The protein is Beta-ketoacyl-[acyl-carrier-protein] synthase III of Helicobacter pylori (strain ATCC 700392 / 26695) (Campylobacter pylori).